Reading from the N-terminus, the 690-residue chain is Kelch-like protein 8 (690 aa).

In terms of domain architecture, BTB spans 111-178 (CDVELLVAGS…IYTDKIAITM (68 aa)). The region spanning 213–314 (CMSLYHFSDI…VGWNFLCEAV (102 aa)) is the BACK domain. Kelch repeat units lie at residues 383 to 430 (AIFC…SANG), 431 to 477 (NLYA…SIEN), 478 to 524 (VIYA…VIGR), 525 to 571 (YLFA…VLDG), 572 to 618 (YLYA…ALGG), and 620 to 665 (VYAI…WANV).

Component of the BCR(kel-8) E3 ubiquitin ligase complex, at least composed of cul-3, kel-8 and rbx-1. Interacts with rpy-1. As to expression, expressed in neurons.

The protein resides in the synapse. It participates in protein modification; protein ubiquitination. Functionally, substrate-specific adapter of a BCR (BTB-CUL3-RBX1) E3 ubiquitin ligase complex that regulates degradation of glutamate receptors in neurons. The BCR(kel-8) ubiquitin ligase complex mediates ubiquitination and subsequent degradation of rpy-1. Indirectly regulates the protein turnover of glr-1, possibly via ubiquitination and degradation of rpy-1. In Caenorhabditis elegans, this protein is Kelch-like protein 8 (kel-8).